The chain runs to 146 residues: 3-hydroxyacyl-[acyl-carrier-protein] dehydratase FabZ (146 aa).

His48 is an active-site residue.

It belongs to the thioester dehydratase family. FabZ subfamily.

The protein resides in the cytoplasm. It catalyses the reaction a (3R)-hydroxyacyl-[ACP] = a (2E)-enoyl-[ACP] + H2O. Its function is as follows. Involved in unsaturated fatty acids biosynthesis. Catalyzes the dehydration of short chain beta-hydroxyacyl-ACPs and long chain saturated and unsaturated beta-hydroxyacyl-ACPs. This chain is 3-hydroxyacyl-[acyl-carrier-protein] dehydratase FabZ, found in Campylobacter jejuni subsp. jejuni serotype O:6 (strain 81116 / NCTC 11828).